The following is a 161-amino-acid chain: Allophycocyanin beta chain (161 aa).

At Asn71 the chain carries N4-methylasparagine. A (2R,3E)-phycocyanobilin-binding site is contributed by Cys81.

It belongs to the phycobiliprotein family. In terms of assembly, heterodimer of an alpha and a beta chain. Post-translationally, contains one covalently linked phycocyanobilin chromophore.

Its subcellular location is the plastid. The protein resides in the chloroplast thylakoid membrane. Light-harvesting photosynthetic bile pigment-protein from the phycobiliprotein complex. Allophycocyanin has a maximum absorption at approximately 650 nanometers. The sequence is that of Allophycocyanin beta chain (apcB) from Pyropia haitanensis (Red seaweed).